The chain runs to 383 residues: MSAVGIIAEFNPLHSGHEFLLNQARLIAKKDPIVVLMSGNYVQRGEMAIMSKWDRAKAALQSGADLVFETPFSTAVEPADLFSLGNIDQLAKLGVTDLVFGVEDANLNFAYLGSRIAEIPQNHMDFKDYSQTYSTQYNQMVAHEVGHEINQPNAILGLAYAVANHNLGSPLKLHPVNRIGAGHDDILQRSGVVQSASAIRNLLLHGEDTSNLKYWMPKNEANILAKQKVYPNWNLLYPFLKYRIESSSIEDLRRIYQMSEGLEYKMKQEIHLARDFTEFLRRIKSKRYTYARLRRLSLYTLLNVTYDDMLDSFNHESLMLLGFSKKGRQYLKQNRKNIQTEIISKVDKRSAKSGSLALQVRTDRLFEQVMGVDQNFGQRPIEV.

Residues isoleucine 7 to leucine 20, glycine 101, asparagine 153, and arginine 178 to isoleucine 179 contribute to the ATP site.

The protein belongs to the TmcAL family.

The protein resides in the cytoplasm. The catalysed reaction is cytidine(34) in elongator tRNA(Met) + acetate + ATP = N(4)-acetylcytidine(34) in elongator tRNA(Met) + AMP + diphosphate. Catalyzes the formation of N(4)-acetylcytidine (ac(4)C) at the wobble position of elongator tRNA(Met), using acetate and ATP as substrates. First activates an acetate ion to form acetyladenylate (Ac-AMP) and then transfers the acetyl group to tRNA to form ac(4)C34. This Lactobacillus acidophilus (strain ATCC 700396 / NCK56 / N2 / NCFM) protein is tRNA(Met) cytidine acetate ligase.